The chain runs to 463 residues: Glycine--tRNA ligase (463 aa).

Residues R98 and E174 each coordinate substrate. ATP is bound by residues 206 to 208 (RNE), 216 to 221 (FRTREF), 290 to 291 (EL), and 334 to 337 (GADR). A substrate-binding site is contributed by 221–225 (FEQME). 330–334 (EPSLG) serves as a coordination point for substrate.

The protein belongs to the class-II aminoacyl-tRNA synthetase family. Homodimer.

Its subcellular location is the cytoplasm. The catalysed reaction is tRNA(Gly) + glycine + ATP = glycyl-tRNA(Gly) + AMP + diphosphate. Catalyzes the attachment of glycine to tRNA(Gly). The polypeptide is Glycine--tRNA ligase (Staphylococcus aureus (strain bovine RF122 / ET3-1)).